A 143-amino-acid chain; its full sequence is Large ribosomal subunit protein uL11 (143 aa).

This sequence belongs to the universal ribosomal protein uL11 family. In terms of assembly, part of the ribosomal stalk of the 50S ribosomal subunit. Interacts with L10 and the large rRNA to form the base of the stalk. L10 forms an elongated spine to which L12 dimers bind in a sequential fashion forming a multimeric L10(L12)X complex. In terms of processing, one or more lysine residues are methylated.

Forms part of the ribosomal stalk which helps the ribosome interact with GTP-bound translation factors. This is Large ribosomal subunit protein uL11 from Polynucleobacter necessarius subsp. necessarius (strain STIR1).